The primary structure comprises 395 residues: MNFILAVFAIILLQAVRGEIDNAIVGDPSVECGDDFFEVNIYHSCSCVGNFIIKVKFDTRTTFHGLAFVQNHLDNPDCRSFASKTDSAKNSSLRLTFDQCAIEKRHSTSPRGLFLSTNVVVAFNPEFLTKNDRVFKVQCFYMEMERRIQKVIQISMPPPTMHSKQLNMPVCKYEVLDGSPTGPPVYFATVGQMVYHKWTCDTEHENTFCMLVHSCFVDDGNGQRVQLLNDKGCALDKYLLTNLEYPTDLMAGREAHVYKYADRDNMYFDCQISITVKEPGLDYCDVPSCPDPPRRRRSNTLPAPDDNITAIAAHIEYEDSEIISDYIIPNDDIISLNWLQRNFDMRISELCMTAIGTTLLVFLNAFLFIISLVSIVHVCCFRTSPKLEKTKSTML.

The N-terminal stretch at 1–18 (MNFILAVFAIILLQAVRG) is a signal peptide. Topologically, residues 19–358 (EIDNAIVGDP…ELCMTAIGTT (340 aa)) are extracellular. The ZP domain maps to 46-291 (SCVGNFIIKV…DYCDVPSCPD (246 aa)). N-linked (GlcNAc...) asparagine glycosylation is found at Asn90 and Asn307. A helical transmembrane segment spans residues 359–379 (LLVFLNAFLFIISLVSIVHVC). The Cytoplasmic segment spans residues 380–395 (CFRTSPKLEKTKSTML).

The protein localises to the cell membrane. Its function is as follows. Plays a role in alae formation in L1 and dauer stage larvae. This chain is Cuticlin-5, found in Caenorhabditis elegans.